Consider the following 240-residue polypeptide: Homeobox protein DLX-4 (240 aa).

A disordered region spans residues 80–120; that stretch reads QPLCGPAEHPQELEADSEKPRLSPEPSERRPQAPAKKLRKP. Residues 88-110 are compositionally biased toward basic and acidic residues; sequence HPQELEADSEKPRLSPEPSERRP. The segment at residues 117 to 176 is a DNA-binding region (homeobox); that stretch reads LRKPRTIYSSLQLQHLNQRFQHTQYLALPERAQLAAQLGLTQTQVKIWFQNKRSKYKKLL.

It belongs to the distal-less homeobox family. In terms of tissue distribution, expressed in leukemia cells and placenta. Also expressed in kidney and fetal liver.

It localises to the nucleus. May play a role in determining the production of hemoglobin S. May act as a repressor. During embryonic development, plays a role in palatogenesis. This Homo sapiens (Human) protein is Homeobox protein DLX-4 (DLX4).